Reading from the N-terminus, the 147-residue chain is Allograft inflammatory factor 1 (147 aa).

Ser2 is modified (N-acetylserine). At Lys11 the chain carries N6-acetyllysine. The residue at position 39 (Ser39) is a Phosphoserine. The 36-residue stretch at 45-80 (SKLEAFKTKYMEFDLNGNGDIDIMSLKRMLEKLGVP) folds into the EF-hand 1 domain. Residues Asp58, Asn60, Asn62, Asp64, Glu98, Thr100, and Asp105 each coordinate Ca(2+). Positions 81-115 (KTHLELKKLIREVSSGSEETFSYSDFLRMMLGKRS) constitute an EF-hand 2; degenerate domain. The segment at 127–147 (KNKEHQKPTGPPAKKAISELP) is disordered.

In terms of assembly, homodimer (Potential). Monomer. Interacts with LCP1. In terms of tissue distribution, cardiac allograft, spleen and testis. Expressed by inflammatory cells (macrophages and neutrophils).

The protein resides in the cytoplasm. It is found in the cytoskeleton. It localises to the cell projection. The protein localises to the ruffle membrane. Its subcellular location is the phagocytic cup. Functionally, actin-binding protein that enhances membrane ruffling and RAC activation. Enhances the actin-bundling activity of LCP1. Binds calcium. Plays a role in RAC signaling and in phagocytosis. May play an role in macrophage activation and function. Promotes the proliferation of vascular smooth muscle cells and of T-lymphocytes. Enhances lymphocyte migration. Plays a role in vascular inflammation. The sequence is that of Allograft inflammatory factor 1 (Aif1) from Rattus norvegicus (Rat).